A 1085-amino-acid polypeptide reads, in one-letter code: Error-prone DNA polymerase (1085 aa).

Belongs to the DNA polymerase type-C family. DnaE2 subfamily.

It localises to the cytoplasm. It catalyses the reaction DNA(n) + a 2'-deoxyribonucleoside 5'-triphosphate = DNA(n+1) + diphosphate. Functionally, DNA polymerase involved in damage-induced mutagenesis and translesion synthesis (TLS). It is not the major replicative DNA polymerase. The polypeptide is Error-prone DNA polymerase (Symbiobacterium thermophilum (strain DSM 24528 / JCM 14929 / IAM 14863 / T)).